Here is a 714-residue protein sequence, read N- to C-terminus: MFLRRLSIQWKITLLAGLCLLGVVALLVGLSVYRMQHSSVLVKSASTQMLDESARLRLEARGELQALRIQRYFMDAFQYGKGFSRQILFLRDQAQKRFLDAYDLREDLTRQVRTALAANPEVLGLYVVFEPNALDGKDELFVDQPALGSNDKGRFSLYWAQATPGQLESESMIESELADTSSGPSGAAYNAWYTCPKESGQPCVLDPYFDKVGERQLLMTSIAFPLELDGKVIGVMGLDINLSNLQALSEQGNRELYDGVGQVGILSPAGLFAGNSRDAGLLGKNLAKADPQHAGELLQLLAAGKSRLFNENDDLKVLQPLQPIPGAKPWGVLLEVPKSALLGPALALERQLDDMRREGTWVELGLGLGAAVLGLLVLWLSARGVTRPILGVAHMLRDIASGEGDLTQRLPHTGRDELGELAGWFNRFLDKLQPIIRDVKVSVRDARSTADQSAAISSQTSAGMQQQFREIDQVATASHEMTATAQDVARSAAQAADAARGADQATRDGLALIDRTTQSIDSLAANLTSAMGQVEQLASSSEEIGSVLEVIRAIAEQTNLLALNAAIEAARAGDAGRGFAVVADEVRNLARRTQDSVEQIRGVIEGLQQGTRDVVDAMHGSHRQAQGSVEQVDEAVAALQRIGEAVTVINDMNLQIASAAEEQSSVAEEINRNVAAIRDVTESLSSQAEESAQVSQSLNRLANHQQGLMEQFKA.

Residues 12–32 (ITLLAGLCLLGVVALLVGLSV) form a helical membrane-spanning segment. A Cache domain is found at 50-290 (LDESARLRLE…LLGKNLAKAD (241 aa)). Histamine is bound by residues Glu170, 208–210 (YFD), and Asp239. A helical membrane pass occupies residues 360 to 380 (TWVELGLGLGAAVLGLLVLWL). In terms of domain architecture, HAMP spans 383–437 (RGVTRPILGVAHMLRDIASGEGDLTQRLPHTGRDELGELAGWFNRFLDKLQPIIR). A Methyl-accepting transducer domain is found at 442–678 (SVRDARSTAD…EINRNVAAIR (237 aa)).

Belongs to the methyl-accepting chemotaxis (MCP) protein family. In terms of assembly, homotetramer.

It localises to the cell membrane. In terms of biological role, chemotactic-signal transducers respond to changes in the concentration of attractants and repellents in the environment, transduce a signal from the outside to the inside of the cell, and facilitate sensory adaptation through the variation of the level of methylation. TlpQ is a chemoreceptor that binds and mediates chemotaxis to histamine, a key biological signaling molecule. It binds histamine with high affinity, which permits responses to very low histamine concentrations. Chemotaxis to histamine may play a role in the virulence of P.aeruginosa by recruiting cells at the infection site and consequently modulating the expression of quorum-sensing-dependent virulence genes. TlpQ also binds and mediates chemotaxis to polyamines such as putrescine, spermidine, cadaverine, agmatine and ethylenediamine. In addition, binds the quorum-sensing signal autoinducer 2 (AI-2), thus inducing chemotaxis toward AI-2 and biofilm formation. This Pseudomonas aeruginosa (strain ATCC 15692 / DSM 22644 / CIP 104116 / JCM 14847 / LMG 12228 / 1C / PRS 101 / PAO1) protein is Methyl-accepting chemotaxis protein TlpQ.